A 518-amino-acid chain; its full sequence is Centromere protein T (518 aa).

The interval 1–70 (MADLSSPDGD…RKHSHGTGSV (70 aa)) is disordered. Residues 19–28 (HVLDTADSHT) are compositionally biased toward basic and acidic residues. The span at 34-57 (STQTNPQRRRSQTPYSKRQGSQRK) shows a compositional bias: polar residues. Residue T86 is modified to Phosphothreonine. The flexible stalk domain stretch occupies residues 94-381 (ILLTAPESST…EPHQLFEPPP (288 aa)). 3 disordered regions span residues 102 to 156 (STVM…KRKQ), 271 to 362 (VHHS…ELSS), and 375 to 412 (QLFEPPPSPGVAAVSSESVPAKLPSRTRTAQPRHHQDP). Over residues 294 to 306 (TPSTGTRPQSQMS) the composition is skewed to polar residues. S313, S324, S333, S345, S346, S357, and S382 each carry phosphoserine. A compositionally biased stretch (basic and acidic residues) spans 326-343 (ELREAVGSKEAEEPKDLE). Over residues 384–395 (GVAAVSSESVPA) the composition is skewed to low complexity.

This sequence belongs to the CENP-T/CNN1 family. In terms of assembly, component of the CENPA-CAD complex, composed of CENPI, CENPK, CENPL, CENPO, CENPP, CENPQ, CENPR and CENPS. The CENPA-CAD complex is probably recruited on centromeres by the CENPA-NAC complex, at least composed of CENPA, CENPC, CENPH, CENPM, CENPN, CENPT and CENPU. Identified in a centromeric complex containing histones H2A, H2B, H3 and H4, and at least CENPA, CENPB, CENPC, CENPT, CENPN, HJURP, SUPT16H, SSRP1 and RSF1. Interacts (via N-terminus) with the NDC80 complex. Heterodimer with CENPW; this dimer coassembles with CENPS-CENPX heterodimers at centromeres to form the tetrameric CENP-T-W-S-X complex. In terms of processing, dynamically phosphorylated during the cell cycle. Phosphorylated during G2 phase, metaphase and anaphase, but not during telophase or G1 phase.

The protein localises to the nucleus. It is found in the chromosome. The protein resides in the centromere. Its subcellular location is the kinetochore. Component of the CENPA-NAC (nucleosome-associated) complex, a complex that plays a central role in assembly of kinetochore proteins, mitotic progression and chromosome segregation. The CENPA-NAC complex recruits the CENPA-CAD (nucleosome distal) complex and may be involved in incorporation of newly synthesized CENPA into centromeres. Part of a nucleosome-associated complex that binds specifically to histone H3-containing nucleosomes at the centromere, as opposed to nucleosomes containing CENPA. Component of the heterotetrameric CENP-T-W-S-X complex that binds and supercoils DNA, and plays an important role in kinetochore assembly. CENPT has a fundamental role in kinetochore assembly and function. It is one of the inner kinetochore proteins, with most further proteins binding downstream. Required for normal chromosome organization and normal progress through mitosis. In Rattus norvegicus (Rat), this protein is Centromere protein T (Cenpt).